The sequence spans 357 residues: MQETSATITAERKHSHVDVCLNRPVCFDGQDTGLDAWRFEHNAAPEIDFAEIDLTAEFLGHAIGMPLMISSMTGGYGDALALNRTLAEAAERFRIPLGVGSMRQALEGNSHRESFSIVRSSAPSVPIFANIGAPEVAAGLSREQLSTLVELIEADGLIVHLNPAQELFQPEGSTNFRGFLDRLHDITATINVPVIAKEVGCGISAPLASKLADAGVKAIDVAGAGGISWQKVEECRYLDRFGNEERFSPSALDEFLNWGIPTAECLTGIAALKEKSPEYGSLAVISSGGIRNGLDVAKSIALGADIAASAQHLLKALRAGTLEETIRTWANDLRAAMFLTGSATTAQLKHAPIYRKP.

12–13 (RK) serves as a coordination point for substrate. Residues Ser-70, 71 to 73 (SMT), Ser-101, and Asn-130 each bind FMN. 101-103 (SMR) is a substrate binding site. Substrate is bound at residue Gln-165. Glu-166 is a binding site for Mg(2+). FMN contacts are provided by residues Lys-197, 289-291 (GIR), and 310-311 (AQ).

The protein belongs to the IPP isomerase type 2 family. Homooctamer. Dimer of tetramers. Requires FMN as cofactor. It depends on NADPH as a cofactor. Mg(2+) serves as cofactor.

It is found in the cytoplasm. The catalysed reaction is isopentenyl diphosphate = dimethylallyl diphosphate. Its function is as follows. Involved in the biosynthesis of isoprenoids. Catalyzes the 1,3-allylic rearrangement of the homoallylic substrate isopentenyl (IPP) to its allylic isomer, dimethylallyl diphosphate (DMAPP). In Chlorobaculum parvum (strain DSM 263 / NCIMB 8327) (Chlorobium vibrioforme subsp. thiosulfatophilum), this protein is Isopentenyl-diphosphate delta-isomerase.